Here is a 438-residue protein sequence, read N- to C-terminus: V-type ATP synthase beta chain (438 aa).

The protein belongs to the ATPase alpha/beta chains family.

In terms of biological role, produces ATP from ADP in the presence of a proton gradient across the membrane. The V-type beta chain is a regulatory subunit. The polypeptide is V-type ATP synthase beta chain (Chlamydia trachomatis serovar A (strain ATCC VR-571B / DSM 19440 / HAR-13)).